Consider the following 115-residue polypeptide: Small polypeptide DEVIL 13 (115 aa).

Over residues 1–12 the composition is skewed to basic and acidic residues; that stretch reads MEEKWKLSKKDT. Residues 1 to 89 are disordered; it reads MEEKWKLSKK…SITQKYSSLA (89 aa). Residues 13–65 show a composition bias toward low complexity; that stretch reads TASSSSSKSKFSRSFSTSASSTKSPIFVRSSSTKCSVPSSSSSSSSSSSISRS. The chain crosses the membrane as a helical span at residues 44–63; that stretch reads STKCSVPSSSSSSSSSSSIS. Residues 80–111 are required for DVL/RTFL small polypeptide activity; that stretch reads SITQKYSSLAKEQKARFYIMRRCVAMLVCWHK.

The protein belongs to the DVL/RTFL small polypeptides family.

It is found in the cell membrane. Small polypeptide acting as a regulatory molecule which coordinates cellular responses required for differentiation, growth and development, probably by restricting polar cell proliferation in lateral organs and coordinating socket cell recruitment and differentiation at trichome sites. This chain is Small polypeptide DEVIL 13, found in Arabidopsis thaliana (Mouse-ear cress).